Consider the following 142-residue polypeptide: Large ribosomal subunit protein uL13 (142 aa).

The protein belongs to the universal ribosomal protein uL13 family. As to quaternary structure, part of the 50S ribosomal subunit.

In terms of biological role, this protein is one of the early assembly proteins of the 50S ribosomal subunit, although it is not seen to bind rRNA by itself. It is important during the early stages of 50S assembly. This chain is Large ribosomal subunit protein uL13, found in Buchnera aphidicola subsp. Acyrthosiphon pisum (strain 5A).